The sequence spans 373 residues: Mannitol-1-phosphate 5-dehydrogenase (373 aa).

Residue 3 to 14 (ALHFGAGNIGRG) participates in NAD(+) binding.

Belongs to the mannitol dehydrogenase family.

It carries out the reaction D-mannitol 1-phosphate + NAD(+) = beta-D-fructose 6-phosphate + NADH + H(+). The chain is Mannitol-1-phosphate 5-dehydrogenase from Bacillus pumilus (strain SAFR-032).